We begin with the raw amino-acid sequence, 1057 residues long: Carbamoyl phosphate synthase large chain (1057 aa).

A carboxyphosphate synthetic domain region spans residues 1-401 (MPKRDDIQTI…SLLKAIRSLE (401 aa)). Residues Arg129, Arg169, Gly175, Gly176, Lys208, Ile210, Glu215, Gly241, Ile242, His243, Gln284, and Glu298 each coordinate ATP. Residues 133 to 327 (RSLMNDLNVP…IAKLAAKIAV (195 aa)) enclose the ATP-grasp 1 domain. Residues Gln284, Glu298, and Asn300 each coordinate Mg(2+). Residues Gln284, Glu298, and Asn300 each coordinate Mn(2+). The segment at 402-546 (YGVHHLGLPN…YGTYETENES (145 aa)) is oligomerization domain. The interval 547 to 929 (IVTDKEKILV…ALYKGLTGSG (383 aa)) is carbamoyl phosphate synthetic domain. The ATP-grasp 2 domain maps to 671–861 (EALLHTIDVP…MAQLAMQAIM (191 aa)). Positions 707, 746, 748, 752, 777, 778, 779, 780, 820, and 832 each coordinate ATP. Mg(2+)-binding residues include Gln820, Glu832, and Asn834. The Mn(2+) site is built by Gln820, Glu832, and Asn834. An MGS-like domain is found at 930–1057 (VEVKDHGTVL…ESMTFSMRTM (128 aa)). The allosteric domain stretch occupies residues 930–1057 (VEVKDHGTVL…ESMTFSMRTM (128 aa)).

Belongs to the CarB family. Composed of two chains; the small (or glutamine) chain promotes the hydrolysis of glutamine to ammonia, which is used by the large (or ammonia) chain to synthesize carbamoyl phosphate. Tetramer of heterodimers (alpha,beta)4. Mg(2+) serves as cofactor. It depends on Mn(2+) as a cofactor.

It carries out the reaction hydrogencarbonate + L-glutamine + 2 ATP + H2O = carbamoyl phosphate + L-glutamate + 2 ADP + phosphate + 2 H(+). The catalysed reaction is hydrogencarbonate + NH4(+) + 2 ATP = carbamoyl phosphate + 2 ADP + phosphate + 2 H(+). It participates in amino-acid biosynthesis; L-arginine biosynthesis; carbamoyl phosphate from bicarbonate: step 1/1. Its pathway is pyrimidine metabolism; UMP biosynthesis via de novo pathway; (S)-dihydroorotate from bicarbonate: step 1/3. Large subunit of the glutamine-dependent carbamoyl phosphate synthetase (CPSase). CPSase catalyzes the formation of carbamoyl phosphate from the ammonia moiety of glutamine, carbonate, and phosphate donated by ATP, constituting the first step of 2 biosynthetic pathways, one leading to arginine and/or urea and the other to pyrimidine nucleotides. The large subunit (synthetase) binds the substrates ammonia (free or transferred from glutamine from the small subunit), hydrogencarbonate and ATP and carries out an ATP-coupled ligase reaction, activating hydrogencarbonate by forming carboxy phosphate which reacts with ammonia to form carbamoyl phosphate. The polypeptide is Carbamoyl phosphate synthase large chain (Staphylococcus haemolyticus (strain JCSC1435)).